The following is a 298-amino-acid chain: UDP-N-acetylenolpyruvoylglucosamine reductase (298 aa).

An FAD-binding PCMH-type domain is found at 26–191 (KTGGAADVFV…LDATFSLALE (166 aa)). The active site involves Arg170. Residue Ser220 is the Proton donor of the active site. The active site involves Glu290.

The protein belongs to the MurB family. Requires FAD as cofactor.

It is found in the cytoplasm. The enzyme catalyses UDP-N-acetyl-alpha-D-muramate + NADP(+) = UDP-N-acetyl-3-O-(1-carboxyvinyl)-alpha-D-glucosamine + NADPH + H(+). It functions in the pathway cell wall biogenesis; peptidoglycan biosynthesis. Functionally, cell wall formation. The sequence is that of UDP-N-acetylenolpyruvoylglucosamine reductase from Listeria monocytogenes serotype 4b (strain CLIP80459).